Consider the following 417-residue polypeptide: Serine--tRNA ligase (417 aa).

Residue threonine 232 to glutamate 234 participates in L-serine binding. Residues arginine 263 to glutamate 265 and valine 279 contribute to the ATP site. Residue glutamate 286 coordinates L-serine. An ATP-binding site is contributed by glutamate 350–serine 353. Serine 385 provides a ligand contact to L-serine.

This sequence belongs to the class-II aminoacyl-tRNA synthetase family. Type-1 seryl-tRNA synthetase subfamily. As to quaternary structure, homodimer. The tRNA molecule binds across the dimer.

It localises to the cytoplasm. The catalysed reaction is tRNA(Ser) + L-serine + ATP = L-seryl-tRNA(Ser) + AMP + diphosphate + H(+). It catalyses the reaction tRNA(Sec) + L-serine + ATP = L-seryl-tRNA(Sec) + AMP + diphosphate + H(+). It participates in aminoacyl-tRNA biosynthesis; selenocysteinyl-tRNA(Sec) biosynthesis; L-seryl-tRNA(Sec) from L-serine and tRNA(Sec): step 1/1. Its function is as follows. Catalyzes the attachment of serine to tRNA(Ser). Is also able to aminoacylate tRNA(Sec) with serine, to form the misacylated tRNA L-seryl-tRNA(Sec), which will be further converted into selenocysteinyl-tRNA(Sec). This chain is Serine--tRNA ligase, found in Leptospira interrogans serogroup Icterohaemorrhagiae serovar copenhageni (strain Fiocruz L1-130).